We begin with the raw amino-acid sequence, 387 residues long: Small ribosomal subunit biogenesis GTPase RsgA (387 aa).

A CP-type G domain is found at 112–273 (YDGLKPVAAN…LIDSPGVREF (162 aa)). GTP contacts are provided by residues 159-162 (NKID) and 213-221 (GQSGVGKSS). Positions 297, 302, 304, and 310 each coordinate Zn(2+).

The protein belongs to the TRAFAC class YlqF/YawG GTPase family. RsgA subfamily. Monomer. Associates with 30S ribosomal subunit, binds 16S rRNA. The cofactor is Zn(2+).

It localises to the cytoplasm. One of several proteins that assist in the late maturation steps of the functional core of the 30S ribosomal subunit. Helps release RbfA from mature subunits. May play a role in the assembly of ribosomal proteins into the subunit. Circularly permuted GTPase that catalyzes slow GTP hydrolysis, GTPase activity is stimulated by the 30S ribosomal subunit. The protein is Small ribosomal subunit biogenesis GTPase RsgA of Vibrio cholerae serotype O1 (strain ATCC 39315 / El Tor Inaba N16961).